The sequence spans 1459 residues: PPE family protein PPE34 (1459 aa).

It belongs to the mycobacterial PPE family. As to quaternary structure, interacts with human TLR2.

It is found in the cell membrane. The protein resides in the secreted. It localises to the cell wall. The protein localises to the cell surface. Facilitates a shift in the ensuing immunity toward the Th2 phenotype and could aid in immune evasion by mycobacteria. Interacts with human Toll-like receptor 2 (TLR2) and triggers functional maturation of human dendritic cells (DCs), leading to secretion of IL-4, IL-5 and IL-10 from CD4(+) T cells and induction of Th2 immune response. Maturation of DCs involves PI3K, ERK1/2, p38 MAPK and NF-kappa-B signaling pathways. This is PPE family protein PPE34 from Mycobacterium tuberculosis (strain ATCC 25618 / H37Rv).